Here is a 971-residue protein sequence, read N- to C-terminus: uncharacterized protein (971 aa).

This is an uncharacterized protein from Borreliella burgdorferi (strain ATCC 35210 / DSM 4680 / CIP 102532 / B31) (Borrelia burgdorferi).